The sequence spans 806 residues: MLSRHLTVLRSACRVSHDLRVPSTQAVRKSAWSVCYSRRPLHISRSDAASTAALDMGVAPAVEKDHEILKELLDTRHSSGHVLSQGVPTGLFQIDHLRTPSDFLLLAQRTLIRCQLLVQRIARAIGNPSELARVVRNLDRLSDMLCGVIDMAELVRHAHPDQGWANAANDAYEYLCNYMNVLNTHTELYDALRCVMETKDIYHSLSQEAQAVAHIFMRDFEKSGIHLPPHERNRFVELSDQIMILGRAFLQDMSTGTSDTIVEFPTDLLDGMDTSIFAQNLFRLRPSKSIPVVPGSWELHYISKYAPNPQARRLAYMISYTGRTQPVAVLEQLLHARYELAKLTGKQSFAEMTLVDKMAGTPEHVLRFLRLLADAQRPVAQRMIAEFGQLKHALEGSSQVEIWDREYYADAYLQRHHPSQLAPLSPYLSLGSIFTGLSRLFYLLYGIHFRAAETLPGEVWHPDVLKLEVVDETESSVIGLIYCDLYTRDGKPPSAAHYTVRCSRRIDLDDTHLDMELGASADLPPVADTEHLLGVKGATGFGRPGRFQQPVVVLMTDFAPPNIGHGGACLLRWHDVETLFHEMGHAIHSMIGRTEFHNVSGTRCATDFVELPSILMEHFLTDPSVVALTAHHHRTGSPLPYVQLQKHLATQRSLDALDTHQQILLASLDQRYHSERAGAPTFSSSQELESLQADMGLFPPVSNATWQGQFGHLFGYGATYYSYLFDRAIAARVWEQVFAKKPLSREAGERFKMEVLRHGGGKSPWEMLSRLLHEDKIADGNAGAMEAIGRWGLGQNQSNETISAHL.

The transit peptide at Met-1–Lys-29 directs the protein to the mitochondrion. His-581 provides a ligand contact to Zn(2+). Residue Glu-582 is part of the active site. His-585 and His-588 together coordinate Zn(2+).

This sequence belongs to the peptidase M3 family. The cofactor is Zn(2+).

It localises to the mitochondrion matrix. It catalyses the reaction Release of an N-terminal octapeptide as second stage of processing of some proteins imported into the mitochondrion.. Its function is as follows. Cleaves proteins, imported into the mitochondrion, to their mature size. While most mitochondrial precursor proteins are processed to the mature form in one step by mitochondrial processing peptidase (MPP), the sequential cleavage by MIP of an octapeptide after initial processing by MPP is a required step for a subgroup of nuclear-encoded precursor proteins destined for the matrix or the inner membrane. In Malassezia globosa (strain ATCC MYA-4612 / CBS 7966) (Dandruff-associated fungus), this protein is Mitochondrial intermediate peptidase (OCT1).